A 197-amino-acid chain; its full sequence is Large ribosomal subunit protein bL25 (197 aa).

It belongs to the bacterial ribosomal protein bL25 family. CTC subfamily. Part of the 50S ribosomal subunit; part of the 5S rRNA/L5/L18/L25 subcomplex. Contacts the 5S rRNA. Binds to the 5S rRNA independently of L5 and L18.

Functionally, this is one of the proteins that binds to the 5S RNA in the ribosome where it forms part of the central protuberance. This chain is Large ribosomal subunit protein bL25, found in Pseudomonas putida (strain ATCC 700007 / DSM 6899 / JCM 31910 / BCRC 17059 / LMG 24140 / F1).